We begin with the raw amino-acid sequence, 128 residues long: Small ribosomal subunit protein uS9 (128 aa).

A disordered region spans residues 106–128 (PRVVERKKPGRPKARKRFQFSKR). Over residues 113–128 (KPGRPKARKRFQFSKR) the composition is skewed to basic residues.

This sequence belongs to the universal ribosomal protein uS9 family.

The polypeptide is Small ribosomal subunit protein uS9 (Porphyromonas gingivalis (strain ATCC 33277 / DSM 20709 / CIP 103683 / JCM 12257 / NCTC 11834 / 2561)).